The following is a 447-amino-acid chain: Ameloblastin (447 aa).

An N-terminal signal peptide occupies residues 1 to 26; it reads MSASKIPLFKMKDLILILCLLEMSFA. Position 37 is a hydroxyproline (proline 37). Serine 43 carries the phosphoserine modification. The O-linked (GalNAc...) serine glycan is linked to serine 112. Disordered stretches follow at residues 165-211, 307-338, and 353-383; these read QQVA…DFAD, DSPVAATKGPENEEGGAQGSPMPEANPDNLEN, and LLALPKDDIPGLPRSPSGKMKGLPSVTPAAA. 2 consecutive repeat copies span residues 189-201 and 202-214.

This sequence belongs to the ameloblastin family. As to expression, ameloblast-specific. Located at the Tomes processes of secretory ameloblasts and in the sheath space between rod-interrod enamel.

The protein localises to the secreted. It localises to the extracellular space. It is found in the extracellular matrix. Its function is as follows. Involved in the mineralization and structural organization of enamel. This Homo sapiens (Human) protein is Ameloblastin (AMBN).